The primary structure comprises 119 residues: Small ribosomal subunit protein uS13 (119 aa).

Residues 92–119 are disordered; the sequence is RRGLPVRGQRTKTNARTRKGPRKAIRAR.

It belongs to the universal ribosomal protein uS13 family. As to quaternary structure, part of the 30S ribosomal subunit. Forms a loose heterodimer with protein S19. Forms two bridges to the 50S subunit in the 70S ribosome.

Located at the top of the head of the 30S subunit, it contacts several helices of the 16S rRNA. In the 70S ribosome it contacts the 23S rRNA (bridge B1a) and protein L5 of the 50S subunit (bridge B1b), connecting the 2 subunits; these bridges are implicated in subunit movement. Contacts the tRNAs in the A and P-sites. The polypeptide is Small ribosomal subunit protein uS13 (Nitrosomonas eutropha (strain DSM 101675 / C91 / Nm57)).